Here is a 341-residue protein sequence, read N- to C-terminus: tRNA N6-adenosine threonylcarbamoyltransferase (341 aa).

The Fe cation site is built by histidine 111 and histidine 115. Substrate is bound by residues leucine 134–glycine 138, aspartate 167, glycine 180, and asparagine 272. Aspartate 300 is a binding site for Fe cation.

The protein belongs to the KAE1 / TsaD family. Requires Fe(2+) as cofactor.

It is found in the cytoplasm. The enzyme catalyses L-threonylcarbamoyladenylate + adenosine(37) in tRNA = N(6)-L-threonylcarbamoyladenosine(37) in tRNA + AMP + H(+). Functionally, required for the formation of a threonylcarbamoyl group on adenosine at position 37 (t(6)A37) in tRNAs that read codons beginning with adenine. Is involved in the transfer of the threonylcarbamoyl moiety of threonylcarbamoyl-AMP (TC-AMP) to the N6 group of A37, together with TsaE and TsaB. TsaD likely plays a direct catalytic role in this reaction. The polypeptide is tRNA N6-adenosine threonylcarbamoyltransferase (Edwardsiella ictaluri (strain 93-146)).